The primary structure comprises 59 residues: MAVPKRKVSPHRRGNRRAHDSLKVEAFHECNNCGELKRPHNMCSHCGFYNGREVLAPSL.

The span at 1-16 (MAVPKRKVSPHRRGNR) shows a compositional bias: basic residues. The tract at residues 1-20 (MAVPKRKVSPHRRGNRRAHD) is disordered.

The protein belongs to the bacterial ribosomal protein bL32 family.

This is Large ribosomal subunit protein bL32 from Erythrobacter litoralis (strain HTCC2594).